The sequence spans 435 residues: ATP-dependent RNA helicase SUB2 (435 aa).

The interval 1–40 (MSHEGQEELLDYSDSEEIAVPTTTAPSAAAGEGANDKEAD) is disordered. Acidic residues predominate over residues 7–17 (EELLDYSDSEE). Low complexity predominate over residues 19–33 (AVPTTTAPSAAAGEG). The Q motif signature appears at 51-79 (TGFRDFLLKPELLRAIGDCGFEHPSEVQQ). In terms of domain architecture, Helicase ATP-binding spans 82-257 (IPQSILGTDV…KKFMQNPLEI (176 aa)). Residue 95 to 102 (AKSGLGKT) coordinates ATP. Residues 204–207 (DECD) carry the DECD box motif. In terms of domain architecture, Helicase C-terminal spans 269 to 430 (GLQQYYIKLD…EFPEEGVDPS (162 aa)).

It belongs to the DEAD box helicase family. DECD subfamily.

It localises to the nucleus. It carries out the reaction ATP + H2O = ADP + phosphate + H(+). Its function is as follows. ATP-binding RNA helicase involved in transcription elongation and required for the export of mRNA out of the nucleus. SUB2 also plays a role in pre-mRNA splicing and spliceosome assembly. May be involved in rDNA and telomeric silencing, and maintenance of genome integrity. The protein is ATP-dependent RNA helicase SUB2 (SUB2) of Debaryomyces hansenii (strain ATCC 36239 / CBS 767 / BCRC 21394 / JCM 1990 / NBRC 0083 / IGC 2968) (Yeast).